A 340-amino-acid chain; its full sequence is tRNA N6-adenosine threonylcarbamoyltransferase (340 aa).

Residues histidine 115 and histidine 119 each contribute to the Fe cation site. Residues 138–142, aspartate 171, glycine 184, aspartate 188, and asparagine 278 contribute to the substrate site; that span reads VVSGG. Aspartate 306 lines the Fe cation pocket.

The protein belongs to the KAE1 / TsaD family. Requires Fe(2+) as cofactor.

It localises to the cytoplasm. The enzyme catalyses L-threonylcarbamoyladenylate + adenosine(37) in tRNA = N(6)-L-threonylcarbamoyladenosine(37) in tRNA + AMP + H(+). Functionally, required for the formation of a threonylcarbamoyl group on adenosine at position 37 (t(6)A37) in tRNAs that read codons beginning with adenine. Is involved in the transfer of the threonylcarbamoyl moiety of threonylcarbamoyl-AMP (TC-AMP) to the N6 group of A37, together with TsaE and TsaB. TsaD likely plays a direct catalytic role in this reaction. The polypeptide is tRNA N6-adenosine threonylcarbamoyltransferase (Clostridium botulinum (strain 657 / Type Ba4)).